Here is a 547-residue protein sequence, read N- to C-terminus: Chaperonin GroEL (547 aa).

Residues Thr-30 to Pro-33, Lys-51, Asp-87 to Thr-91, Gly-415, and Asp-495 contribute to the ATP site.

This sequence belongs to the chaperonin (HSP60) family. In terms of assembly, forms a cylinder of 14 subunits composed of two heptameric rings stacked back-to-back. Interacts with the co-chaperonin GroES.

Its subcellular location is the cytoplasm. It catalyses the reaction ATP + H2O + a folded polypeptide = ADP + phosphate + an unfolded polypeptide.. Its function is as follows. Together with its co-chaperonin GroES, plays an essential role in assisting protein folding. The GroEL-GroES system forms a nano-cage that allows encapsulation of the non-native substrate proteins and provides a physical environment optimized to promote and accelerate protein folding. In Allorhizobium ampelinum (strain ATCC BAA-846 / DSM 112012 / S4) (Agrobacterium vitis (strain S4)), this protein is Chaperonin GroEL.